The primary structure comprises 409 residues: Shaggy-related protein kinase NtK-1 (409 aa).

The tract at residues 1–27 is disordered; the sequence is MTSVGLAPVSGLRESSSHSVGVDRLPE. The Protein kinase domain maps to 73–357; sequence YMAERIVGQG…ALEAVTHAFF (285 aa). ATP contacts are provided by residues 79–87 and lysine 102; that span reads VGQGSFGVV. The Proton acceptor role is filled by aspartate 198.

The protein belongs to the protein kinase superfamily. CMGC Ser/Thr protein kinase family. GSK-3 subfamily. In terms of processing, autophosphorylated mainly on threonine and serine residues.

The enzyme catalyses L-seryl-[protein] + ATP = O-phospho-L-seryl-[protein] + ADP + H(+). It carries out the reaction L-threonyl-[protein] + ATP = O-phospho-L-threonyl-[protein] + ADP + H(+). May mediate extracellular signals to regulate transcription in differentiating cells. In Nicotiana tabacum (Common tobacco), this protein is Shaggy-related protein kinase NtK-1 (NTK-1).